Here is a 236-residue protein sequence, read N- to C-terminus: 2-C-methyl-D-erythritol 4-phosphate cytidylyltransferase (236 aa).

It belongs to the IspD/TarI cytidylyltransferase family. IspD subfamily. As to quaternary structure, homodimer.

It carries out the reaction 2-C-methyl-D-erythritol 4-phosphate + CTP + H(+) = 4-CDP-2-C-methyl-D-erythritol + diphosphate. The protein operates within isoprenoid biosynthesis; isopentenyl diphosphate biosynthesis via DXP pathway; isopentenyl diphosphate from 1-deoxy-D-xylulose 5-phosphate: step 2/6. In terms of biological role, catalyzes the formation of 4-diphosphocytidyl-2-C-methyl-D-erythritol from CTP and 2-C-methyl-D-erythritol 4-phosphate (MEP). The polypeptide is 2-C-methyl-D-erythritol 4-phosphate cytidylyltransferase (Escherichia coli O17:K52:H18 (strain UMN026 / ExPEC)).